Consider the following 196-residue polypeptide: ATP-dependent Clp protease proteolytic subunit (196 aa).

S101 acts as the Nucleophile in catalysis. H126 is an active-site residue.

The protein belongs to the peptidase S14 family. As to quaternary structure, component of the chloroplastic Clp protease core complex.

It is found in the plastid. The protein resides in the chloroplast stroma. The catalysed reaction is Hydrolysis of proteins to small peptides in the presence of ATP and magnesium. alpha-casein is the usual test substrate. In the absence of ATP, only oligopeptides shorter than five residues are hydrolyzed (such as succinyl-Leu-Tyr-|-NHMec, and Leu-Tyr-Leu-|-Tyr-Trp, in which cleavage of the -Tyr-|-Leu- and -Tyr-|-Trp bonds also occurs).. Its function is as follows. Cleaves peptides in various proteins in a process that requires ATP hydrolysis. Has a chymotrypsin-like activity. Plays a major role in the degradation of misfolded proteins. This Gossypium barbadense (Sea Island cotton) protein is ATP-dependent Clp protease proteolytic subunit.